Here is a 267-residue protein sequence, read N- to C-terminus: Indole-3-glycerol phosphate synthase (267 aa).

The protein belongs to the TrpC family.

It carries out the reaction 1-(2-carboxyphenylamino)-1-deoxy-D-ribulose 5-phosphate + H(+) = (1S,2R)-1-C-(indol-3-yl)glycerol 3-phosphate + CO2 + H2O. Its pathway is amino-acid biosynthesis; L-tryptophan biosynthesis; L-tryptophan from chorismate: step 4/5. In Cupriavidus taiwanensis (strain DSM 17343 / BCRC 17206 / CCUG 44338 / CIP 107171 / LMG 19424 / R1) (Ralstonia taiwanensis (strain LMG 19424)), this protein is Indole-3-glycerol phosphate synthase.